The following is a 944-amino-acid chain: snRNA-activating protein complex subunit 4 homolog (944 aa).

Positions 1–22 are disordered; the sequence is MSDLVMFEPGASTSTDVPTNTD. Positions 11 to 22 are enriched in polar residues; it reads ASTSTDVPTNTD. Positions 177–244 constitute a Myb-like 1 domain; that stretch reads TSNFDRRQWT…AVKSKWYNEL (68 aa). The 57-residue stretch at 245–301 folds into the HTH myb-type 1 domain; sequence NPKWNKEHWSNEEVEKLKYLRESPKFVSWPMLALNLGTNRTSYQCMEKYKTEVSQHS. The H-T-H motif DNA-binding region spans 273–297; sequence WPMLALNLGTNRTSYQCMEKYKTEV. The Myb-like 2 domain maps to 304-350; sequence WSQDEDTKLIALTKITSINGHIQWDKVAQCMPGRTRQQVRTRFSHTL. HTH myb-type domains lie at 351-406 and 407-459; these read DASV…NRSA and HVNE…AAKL. DNA-binding regions (H-T-H motif) lie at residues 379–402 and 432–455; these read WAKVAQAVQNRNDSQCRERWTNVL and WAKCQMLLPKKTSRQLRRRYLQLI. The segment covering 911–921 has biased composition (low complexity); that stretch reads ARPARPPRSSA. Positions 911–935 are disordered; that stretch reads ARPARPPRSSAGTPTPSHVSIDTES. The segment covering 922-935 has biased composition (polar residues); the sequence is GTPTPSHVSIDTES.

Broadly expressed in all tissues, including head, vulva and tail.

The protein localises to the nucleus. Functionally, binds to the promoter regions of RNA polymerase II and III small-nuclear RNA genes, type 3 RNA polymerase III non-coding RNA genes, small nucleolar RNAs and transfer RNA genes. Required for expression of mature 21U-RNAs. This Caenorhabditis elegans protein is snRNA-activating protein complex subunit 4 homolog.